Here is a 249-residue protein sequence, read N- to C-terminus: Triosephosphate isomerase (249 aa).

N12 and K14 together coordinate substrate. K14 carries the post-translational modification N6-acetyllysine. A 3'-nitrotyrosine modification is found at Y68. The residue at position 80 (S80) is a Phosphoserine. Residue H96 is the Electrophile of the active site. A Phosphoserine modification is found at S106. Residue K142 forms a Glycyl lysine isopeptide (Lys-Gly) (interchain with G-Cter in SUMO1) linkage. K149 carries the N6-succinyllysine modification. Residue K156 is modified to N6-acetyllysine; alternate. N6-succinyllysine; alternate is present on K156. At S159 the chain carries Phosphoserine. The active-site Proton acceptor is E166. T173 is modified (phosphothreonine). N6-acetyllysine; alternate is present on K194. K194 is subject to N6-succinyllysine; alternate. K194 bears the N6-methyllysine; alternate mark. S198 is subject to Phosphoserine. Y209 is subject to 3'-nitrotyrosine. Residue S212 is modified to Phosphoserine. The residue at position 214 (T214) is a Phosphothreonine. S223 bears the Phosphoserine mark. K238 is subject to N6-acetyllysine.

Belongs to the triosephosphate isomerase family. In terms of assembly, homodimer.

The protein resides in the cytoplasm. The catalysed reaction is dihydroxyacetone phosphate = methylglyoxal + phosphate. The enzyme catalyses D-glyceraldehyde 3-phosphate = dihydroxyacetone phosphate. It functions in the pathway carbohydrate degradation; glycolysis; D-glyceraldehyde 3-phosphate from glycerone phosphate: step 1/1. Its pathway is carbohydrate biosynthesis; gluconeogenesis. Its function is as follows. Triosephosphate isomerase is an extremely efficient metabolic enzyme that catalyzes the interconversion between dihydroxyacetone phosphate (DHAP) and D-glyceraldehyde-3-phosphate (G3P) in glycolysis and gluconeogenesis. Functionally, it is also responsible for the non-negligible production of methylglyoxal a reactive cytotoxic side-product that modifies and can alter proteins, DNA and lipids. This Canis lupus familiaris (Dog) protein is Triosephosphate isomerase (TPI1).